Consider the following 153-residue polypeptide: Nucleoside diphosphate kinase (153 aa).

The ATP site is built by lysine 12, phenylalanine 60, arginine 88, threonine 94, arginine 105, and asparagine 115. Catalysis depends on histidine 118, which acts as the Pros-phosphohistidine intermediate.

Belongs to the NDK family. Mg(2+) is required as a cofactor.

It localises to the cytoplasm. The catalysed reaction is a 2'-deoxyribonucleoside 5'-diphosphate + ATP = a 2'-deoxyribonucleoside 5'-triphosphate + ADP. The enzyme catalyses a ribonucleoside 5'-diphosphate + ATP = a ribonucleoside 5'-triphosphate + ADP. Functionally, major role in the synthesis of nucleoside triphosphates other than ATP. The ATP gamma phosphate is transferred to the NDP beta phosphate via a ping-pong mechanism, using a phosphorylated active-site intermediate. In Natronomonas pharaonis (strain ATCC 35678 / DSM 2160 / CIP 103997 / JCM 8858 / NBRC 14720 / NCIMB 2260 / Gabara) (Halobacterium pharaonis), this protein is Nucleoside diphosphate kinase.